Here is a 257-residue protein sequence, read N- to C-terminus: MDELFKAIILGIIQGITEFLPISSTAHLVITPWIFGWSGIVNSLSFDIAVHVGTLISLLYCFWKDWINIFFRERKMLLFIIIGTIPAGIAGIAFHDLIESALRHPLIIVVTLILVGFLMLYAEKVGKKLIRSITLSDAVVIGTAQAIALIPGVSRSGITITAGLFKGLDRAYAAKFSFLLSTPAIAGAAMLDFYKSIKIGHSHDYSLFIIGVISAAITGIIAIKFLLSFLQKYPLNLFIYYRWFLAVVIFLLYFFRN.

The next 8 helical transmembrane spans lie at 4–24 (LFKA…PISS), 51–71 (HVGT…NIFF), 78–98 (LFII…HDLI), 106–126 (LIIV…EKVG), 133–153 (ITLS…IPGV), 171–191 (AYAA…AAML), 207–227 (LFII…KFLL), and 235–255 (LNLF…LYFF).

This sequence belongs to the UppP family.

The protein localises to the cell inner membrane. The catalysed reaction is di-trans,octa-cis-undecaprenyl diphosphate + H2O = di-trans,octa-cis-undecaprenyl phosphate + phosphate + H(+). In terms of biological role, catalyzes the dephosphorylation of undecaprenyl diphosphate (UPP). Confers resistance to bacitracin. In Thermodesulfovibrio yellowstonii (strain ATCC 51303 / DSM 11347 / YP87), this protein is Undecaprenyl-diphosphatase.